A 625-amino-acid polypeptide reads, in one-letter code: Threonine--tRNA ligase (625 aa).

The segment at 1-147 is editing domain; that stretch reads MRILLIHSDY…TIVPGEAKKE (147 aa). The tract at residues 206-505 is catalytic; sequence PHVKIMLEQE…MKKGKKPMYP (300 aa). Residues Cys298, His350, and His474 each contribute to the Zn(2+) site.

This sequence belongs to the class-II aminoacyl-tRNA synthetase family. Homodimer. It depends on Zn(2+) as a cofactor.

The protein resides in the cytoplasm. It carries out the reaction tRNA(Thr) + L-threonine + ATP = L-threonyl-tRNA(Thr) + AMP + diphosphate + H(+). In terms of biological role, catalyzes the attachment of threonine to tRNA(Thr) in a two-step reaction: L-threonine is first activated by ATP to form Thr-AMP and then transferred to the acceptor end of tRNA(Thr). Also edits incorrectly charged L-seryl-tRNA(Thr). This Thermococcus sibiricus (strain DSM 12597 / MM 739) protein is Threonine--tRNA ligase.